The following is a 231-amino-acid chain: Ureidoacrylate amidohydrolase RutB (231 aa).

D25 serves as the catalytic Proton acceptor. K134 is an active-site residue. The Nucleophile role is filled by C167.

This sequence belongs to the isochorismatase family. RutB subfamily.

It catalyses the reaction (Z)-3-ureidoacrylate + H2O + H(+) = (Z)-3-aminoacrylate + NH4(+) + CO2. The catalysed reaction is (Z)-3-ureidoacrylate + H2O = (Z)-3-aminoacrylate + carbamate + H(+). The enzyme catalyses (Z)-2-methylureidoacrylate + H2O + H(+) = (Z)-2-methylaminoacrylate + NH4(+) + CO2. Hydrolyzes ureidoacrylate to form aminoacrylate and carbamate. The carbamate hydrolyzes spontaneously, thereby releasing one of the nitrogen atoms of the pyrimidine ring as ammonia and one of its carbon atoms as CO2. The polypeptide is Ureidoacrylate amidohydrolase RutB (Escherichia coli O157:H7 (strain EC4115 / EHEC)).